A 217-amino-acid chain; its full sequence is Uracil-DNA glycosylase (217 aa).

Asp-62 serves as the catalytic Proton acceptor.

It belongs to the uracil-DNA glycosylase (UDG) superfamily. UNG family.

The protein resides in the cytoplasm. The catalysed reaction is Hydrolyzes single-stranded DNA or mismatched double-stranded DNA and polynucleotides, releasing free uracil.. Its function is as follows. Excises uracil residues from the DNA which can arise as a result of misincorporation of dUMP residues by DNA polymerase or due to deamination of cytosine. The protein is Uracil-DNA glycosylase of Streptococcus pneumoniae (strain JJA).